The following is a 432-amino-acid chain: C2H2 type master regulator of conidiophore development brlA (432 aa).

Disordered stretches follow at residues 22 to 72 (SNEC…RTPG) and 238 to 260 (KQHS…ADTP). The span at 29–44 (TSSFSPLESPTPTPTS) shows a compositional bias: low complexity. Polar residues-rich tracts occupy residues 62 to 72 (LPNNTYERTPG) and 238 to 252 (KQHS…CSLG). 2 consecutive C2H2-type zinc fingers follow at residues 320 to 344 (FKCK…MKSH) and 350 to 375 (HVCW…TKTH). The interval 388–432 (LDENSPDYDPEFRGQLTPDGRPIYGSKLDDPIPGAGDMSLDGWDE) is disordered.

It localises to the nucleus. Its function is as follows. BrlA, abaA and wetA are pivotal regulators of conidiophore development and conidium maturation. They act individually and together to regulate their own expression and that of numerous other sporulation-specific genes. Binds promoters of target genes at brlA response elements (BREs) containing the conserved sequence 5'-(C/A)(A/G)AGGG(G/A)-3'. Controls the expression of the conidiophore-specific phenol oxidase ivoB. Controls the expression of the hydrophobin rodA. Mediates the developmental switch from the indeterminate, apical growth pattern of vegetative cells to the budding growth pattern of conidiophores. Expression of brlA leads to activation of abaA, wetA and stuA, cessation of vegetative growth, cellular vacuolization and spore formation. The protein is C2H2 type master regulator of conidiophore development brlA of Emericella nidulans (strain FGSC A4 / ATCC 38163 / CBS 112.46 / NRRL 194 / M139) (Aspergillus nidulans).